The chain runs to 1173 residues: TBC1 domain family member 5 homolog A (1173 aa).

Disordered regions lie at residues 22–203, 217–324, 425–446, and 823–872; these read KKSK…YYNE, NNYN…RNPN, DQDADLQQQQQQQQQQQRKPVS, and IVNQ…QNKG. Low complexity-rich tracts occupy residues 26-107, 127-203, and 217-290; these read SNIN…NNVN, NNNI…YYNE, and NNYN…QQYY. The stretch at 163-214 forms a coiled coil; it reads NENYNENYNNNNNNNNNNNNNNNNNNNNNNNNNNNNNYYNENNNQQQLQQNY. The segment covering 299 to 313 has biased composition (basic and acidic residues); that stretch reads QHEEFEKEIEQKEQD. Polar residues predominate over residues 314–324; the sequence is SSPINVNRNPN. Residues 374–729 form the Rab-GAP TBC domain; sequence PKDTTVRSIF…ILWDSIFKES (356 aa). Residues 431-441 show a composition bias toward low complexity; that stretch reads QQQQQQQQQQQ. Residues 885–930 are a coiled coil; that stretch reads TFKQIINDLNEYNEEFQLAKENEQLKQQKSKLQKEVDTLKETQTHV. Positions 983 to 994 are enriched in polar residues; it reads NNSKNRLPNKSV. 2 disordered regions span residues 983-1015 and 1054-1089; these read NNSKNRLPNKSVQQSTISQQSTTPQQSITQQTS and QSTQQEQQSTQQEQQQSTQPQQSQQNNDNSPFQQYN. Low complexity-rich tracts occupy residues 995 to 1015 and 1054 to 1078; these read QQSTISQQSTTPQQSITQQTS and QSTQQEQQSTQQEQQQSTQPQQSQQ. The span at 1079–1089 shows a compositional bias: polar residues; the sequence is NNDNSPFQQYN.

Its function is as follows. May act as a GTPase-activating protein for Rab family protein(s). The chain is TBC1 domain family member 5 homolog A (tbc1d5A) from Dictyostelium discoideum (Social amoeba).